Reading from the N-terminus, the 887-residue chain is DNA mismatch repair protein MutS (887 aa).

621 to 628 (GPNMGGKS) serves as a coordination point for ATP. The segment at 828 to 853 (AEPEPNKPAAAAKTKPASPQPDLFAS) is disordered. Residues 834–848 (KPAAAAKTKPASPQP) show a composition bias toward low complexity.

Belongs to the DNA mismatch repair MutS family.

Functionally, this protein is involved in the repair of mismatches in DNA. It is possible that it carries out the mismatch recognition step. This protein has a weak ATPase activity. The protein is DNA mismatch repair protein MutS of Saccharophagus degradans (strain 2-40 / ATCC 43961 / DSM 17024).